The sequence spans 83 residues: Exodeoxyribonuclease 7 small subunit (83 aa).

It belongs to the XseB family. In terms of assembly, heterooligomer composed of large and small subunits.

The protein resides in the cytoplasm. It catalyses the reaction Exonucleolytic cleavage in either 5'- to 3'- or 3'- to 5'-direction to yield nucleoside 5'-phosphates.. Its function is as follows. Bidirectionally degrades single-stranded DNA into large acid-insoluble oligonucleotides, which are then degraded further into small acid-soluble oligonucleotides. The polypeptide is Exodeoxyribonuclease 7 small subunit (Sinorhizobium medicae (strain WSM419) (Ensifer medicae)).